Here is a 250-residue protein sequence, read N- to C-terminus: Small ribosomal subunit protein uS3 (250 aa).

The KH type-2 domain occupies 39-111 (IRTLIKNNYP…KVQINIFEVK (73 aa)).

Belongs to the universal ribosomal protein uS3 family. As to quaternary structure, part of the 30S ribosomal subunit. Forms a tight complex with proteins S10 and S14.

Binds the lower part of the 30S subunit head. Binds mRNA in the 70S ribosome, positioning it for translation. In Alder yellows phytoplasma, this protein is Small ribosomal subunit protein uS3.